The following is a 154-amino-acid chain: Aspartate carbamoyltransferase regulatory chain (154 aa).

Zn(2+) is bound by residues Cys109, Cys114, Cys138, and Cys141.

This sequence belongs to the PyrI family. Contains catalytic and regulatory chains. Requires Zn(2+) as cofactor.

In terms of biological role, involved in allosteric regulation of aspartate carbamoyltransferase. The chain is Aspartate carbamoyltransferase regulatory chain from Photobacterium profundum (strain SS9).